The chain runs to 259 residues: Undecaprenyl-diphosphatase 4 (259 aa).

8 helical membrane passes run 1–21 (MNWL…FLPI), 39–59 (AGLF…FIYY), 71–91 (FSKL…IGLL), 99–119 (ISKT…FLYV), 133–153 (ITYK…FPAI), 173–193 (AAYF…ILQF), 208–228 (SLIV…SWMI), and 239–259 (FAYY…TDVF).

The protein belongs to the UppP family.

It localises to the cell membrane. The catalysed reaction is di-trans,octa-cis-undecaprenyl diphosphate + H2O = di-trans,octa-cis-undecaprenyl phosphate + phosphate + H(+). Its function is as follows. Catalyzes the dephosphorylation of undecaprenyl diphosphate (UPP). Confers resistance to bacitracin. The chain is Undecaprenyl-diphosphatase 4 from Bacillus thuringiensis subsp. konkukian (strain 97-27).